Consider the following 249-residue polypeptide: Type III pantothenate kinase (249 aa).

Residue 6–13 participates in ATP binding; sequence DCGNSFIK. Substrate is bound by residues Tyr93 and 100–103; that span reads GMDR. The active-site Proton acceptor is Asp102. Asp122 contributes to the K(+) binding site. Thr125 provides a ligand contact to ATP. Thr181 is a substrate binding site.

This sequence belongs to the type III pantothenate kinase family. In terms of assembly, homodimer. The cofactor is NH4(+). K(+) serves as cofactor.

It is found in the cytoplasm. It carries out the reaction (R)-pantothenate + ATP = (R)-4'-phosphopantothenate + ADP + H(+). Its pathway is cofactor biosynthesis; coenzyme A biosynthesis; CoA from (R)-pantothenate: step 1/5. Its function is as follows. Catalyzes the phosphorylation of pantothenate (Pan), the first step in CoA biosynthesis. The chain is Type III pantothenate kinase from Pseudomonas putida (strain W619).